A 383-amino-acid chain; its full sequence is Caspase a (383 aa).

A propeptide spanning residues 1–142 is cleaved from the precursor; it reads MAKSIKDHLQ…ETYEIKDKSV (142 aa). The 74-residue stretch at 8 to 81 folds into the Pyrin domain; sequence HLQDALSNIG…RGIKCNAVAE (74 aa). The disordered stretch occupies residues 87 to 106; it reads TGQGGVSQPEPPVPEPIPKD. Active-site residues include His220 and Cys270. Residues 275 to 296 constitute a propeptide that is removed on maturation; it reads HGRVWASDGEPDEPIEIEDDDF.

This sequence belongs to the peptidase C14A family. In terms of assembly, heterotetramer that consists of two anti-parallel arranged heterodimers, each one formed by a 20 kDa (p20) and a 10 kDa (p10) subunit. Interacts (via pyrin domain) with pycard (via pyrin domain). Interacts with caspb. Component of NLRP1 inflammasomes. Inflammasomes are supramolecular complexes that assemble in the cytosol in response to pathogens and other damage-associated signals and play critical roles in innate immunity and inflammation. The NLRP1 inflammasome is composed of the signal sensor nlrp1, and the adapter pycard (asc), which recruit effector pro-inflammatory caspases caspa and/or caspb. The interaction between nlrp1 and pycard is required for the sequential recruitment of caspa and then caspb. Caspa is preferentially recruited first and this causes the cleavage of pro-il1b into the midformed il1b. This is followed by the recruitment of caspb, which is activated and cleaves the midformed il1b resulting in il1b maturation. Interacts with caiap. In terms of processing, the two subunits are derived from the precursor sequence by an autocatalytic mechanism.

It is found in the inflammasome. It localises to the cytoplasm. It carries out the reaction Strict requirement for an Asp residue at position P1 and has a preferred cleavage sequence of Tyr-Val-Ala-Asp-|-.. Thiol protease which cleaves IL-1 beta (il1b), releasing the mature cytokine which is involved in a variety of inflammatory processes, and mediates apoptosis. Component of the NLRP1 inflammasome, which plays a crucial role in innate immunity and inflammation. In response to pathogens and other damage-associated signals, recruited to the NLRP1 inflammasome in its precursor form. Its subsequent activation causes the cleavage of pro-il1b into the midformed il1b, which then evetually leads to il1b maturation and secretion in the extracellular milieu. Required for the development of the cartilaginous pharyngeal skeleton. The chain is Caspase a from Danio rerio (Zebrafish).